Here is a 213-residue protein sequence, read N- to C-terminus: MVEKTILEAVKKVVEESPKRNFSESVDLAINLKNLDMNQPKNRVDEEVILPHGLGKELKIGVFAKGDVGLKAKAAGAAYVISDVELEELAADKNRARVLANECDLFIAETQFMPIIGKNLGIVLGPRGKMPIPLMPNKDVGELIQSKQNAVKLRSKDRLTFHVAVGRRDMNPEDLAENIETIMSRLERVLDKGKHNLRTVYVTTTMGKSERVV.

It belongs to the universal ribosomal protein uL1 family. Part of the 50S ribosomal subunit.

Functionally, binds directly to 23S rRNA. Probably involved in E site tRNA release. Its function is as follows. Protein L1 is also a translational repressor protein, it controls the translation of its operon by binding to its mRNA. This is Large ribosomal subunit protein uL1 from Methanosarcina acetivorans (strain ATCC 35395 / DSM 2834 / JCM 12185 / C2A).